The primary structure comprises 1551 residues: ABC-type transporter phomO (1551 aa).

The next 7 helical transmembrane spans lie at Leu34–Ala54, Cys110–Val130, Ser139–Phe159, Ser172–Val192, Gly202–Val222, Leu314–Ala334, and Gly358–Trp378. The ABC transmembrane type-1 1 domain maps to Leu326–Ala599. The N-linked (GlcNAc...) asparagine glycan is linked to Asn384. The next 4 helical transmembrane spans lie at Leu428–Leu448, Val452–Tyr472, Leu535–Phe555, and Leu577–Phe597. Residues Ile645 to Asn861 enclose the ABC transporter 1 domain. Asn647 is a glycosylation site (N-linked (GlcNAc...) asparagine). Gly678–Ser685 lines the ATP pocket. N-linked (GlcNAc...) asparagine glycosylation is present at Asn721. Residues Tyr843 to Thr889 form a disordered region. Helical transmembrane passes span Ser903–Leu923, Val959–Leu979, Leu1027–Ile1044, and Leu1137–Leu1157. In terms of domain architecture, ABC transmembrane type-1 2 spans Val910–Thr1199. N-linked (GlcNAc...) asparagine glycosylation is present at Asn1179. Residues Asp1219–Asp1228 show a composition bias toward basic and acidic residues. Residues Asp1219–Ser1296 form a disordered region. Acidic residues predominate over residues Tyr1259–Asp1270. In terms of domain architecture, ABC transporter 2 spans His1287–Ser1535. Gly1323–Ser1330 contacts ATP. N-linked (GlcNAc...) asparagine glycosylation occurs at Asn1486.

It belongs to the ABC transporter superfamily. ABCC family. Conjugate transporter (TC 3.A.1.208) subfamily.

It localises to the membrane. ABC-type transporter; part of the gene cluster that mediates the biosynthesis of the phomopsins, a group of hexapeptide mycotoxins which infects lupins and causes lupinosis disease in livestock. This is ABC-type transporter phomO from Diaporthe leptostromiformis (Lupinosis disease fungus).